We begin with the raw amino-acid sequence, 297 residues long: Aspartate carbamoyltransferase catalytic subunit (297 aa).

Residues R49 and T50 each coordinate carbamoyl phosphate. K77 serves as a coordination point for L-aspartate. The carbamoyl phosphate site is built by R99, H129, and Q132. Residues R162 and R215 each coordinate L-aspartate. Positions 256 and 257 each coordinate carbamoyl phosphate.

Belongs to the aspartate/ornithine carbamoyltransferase superfamily. ATCase family. As to quaternary structure, heterododecamer (2C3:3R2) of six catalytic PyrB chains organized as two trimers (C3), and six regulatory PyrI chains organized as three dimers (R2).

It carries out the reaction carbamoyl phosphate + L-aspartate = N-carbamoyl-L-aspartate + phosphate + H(+). Its pathway is pyrimidine metabolism; UMP biosynthesis via de novo pathway; (S)-dihydroorotate from bicarbonate: step 2/3. In terms of biological role, catalyzes the condensation of carbamoyl phosphate and aspartate to form carbamoyl aspartate and inorganic phosphate, the committed step in the de novo pyrimidine nucleotide biosynthesis pathway. This is Aspartate carbamoyltransferase catalytic subunit from Legionella pneumophila (strain Paris).